A 409-amino-acid chain; its full sequence is MAEDGINSYMTGPDEQGRFGIFGGRFVSETLMPLILDLEARYEHAKTDPDFWAEMDDLWKNYVGRPSPLYFAPRLTEHLGGAKIYLKRDELNHTGAHKINNVLGQIILARRMGKTRIIAETGAGQHGVATATVCAKFGLKCVVYMGAHDVERQAPNVFRMRLLGAEVVPVTSGRGTLKDAMNDALRDWVTNVRDTFYCIGTVAGPHPYPAMVRDFQSIIGREVRWQLAEQEEGRLPDTLVAAIGGGSNAMGLFHPFLDDPSVRIVGVEAGGKGVDDRMEHCASLTGGRPGVLHGNRTYLLQDADGQILEGFSISAGLDYPGIGPEHAWLHDTGRAEYVSITDAEALEAFQLCCALEGIIPALEPSHALAHVIKIAPTLPRDHIIVMNMCGRGDKDIFTVAKHLGFDMKI.

Lys98 carries the post-translational modification N6-(pyridoxal phosphate)lysine.

Belongs to the TrpB family. As to quaternary structure, tetramer of two alpha and two beta chains. Requires pyridoxal 5'-phosphate as cofactor.

It carries out the reaction (1S,2R)-1-C-(indol-3-yl)glycerol 3-phosphate + L-serine = D-glyceraldehyde 3-phosphate + L-tryptophan + H2O. It participates in amino-acid biosynthesis; L-tryptophan biosynthesis; L-tryptophan from chorismate: step 5/5. In terms of biological role, the beta subunit is responsible for the synthesis of L-tryptophan from indole and L-serine. The chain is Tryptophan synthase beta chain (trpB) from Cereibacter sphaeroides (strain ATCC 17023 / DSM 158 / JCM 6121 / CCUG 31486 / LMG 2827 / NBRC 12203 / NCIMB 8253 / ATH 2.4.1.) (Rhodobacter sphaeroides).